Consider the following 159-residue polypeptide: Protein NrdI (159 aa).

It belongs to the NrdI family.

In terms of biological role, probably involved in ribonucleotide reductase function. The sequence is that of Protein NrdI from Rhodococcus erythropolis (strain PR4 / NBRC 100887).